An 860-amino-acid chain; its full sequence is Leucine--tRNA ligase (860 aa).

A 'HIGH' region motif is present at residues 42-52 (PYPSGRLHMGH). A 'KMSKS' region motif is present at residues 619-623 (KMSKS). Residue Lys622 coordinates ATP.

It belongs to the class-I aminoacyl-tRNA synthetase family.

The protein localises to the cytoplasm. It carries out the reaction tRNA(Leu) + L-leucine + ATP = L-leucyl-tRNA(Leu) + AMP + diphosphate. The protein is Leucine--tRNA ligase of Pectobacterium atrosepticum (strain SCRI 1043 / ATCC BAA-672) (Erwinia carotovora subsp. atroseptica).